A 23-amino-acid polypeptide reads, in one-letter code: MVKIGINEFGRIGRLAFRRIYEL.

It belongs to the thymidine/pyrimidine-nucleoside phosphorylase family. Homodimer.

It catalyses the reaction thymidine + phosphate = 2-deoxy-alpha-D-ribose 1-phosphate + thymine. The enzymes which catalyze the reversible phosphorolysis of pyrimidine nucleosides are involved in the degradation of these compounds and in their utilization as carbon and energy sources, or in the rescue of pyrimidine bases for nucleotide synthesis. The sequence is that of Thymidine phosphorylase (deoA) from Lacticaseibacillus rhamnosus (Lactobacillus rhamnosus).